We begin with the raw amino-acid sequence, 574 residues long: Septation ring formation regulator EzrA (574 aa).

Residues 1–7 are Extracellular-facing; that stretch reads MPTGTII. A helical transmembrane segment spans residues 8–26; it reads LIVSIVIILIIAYVACLIV. The Cytoplasmic portion of the chain corresponds to 27–574; sequence RKRNDNLLVA…YEKTREAIRY (548 aa). Residues 105–189 adopt a coiled-coil conformation; sequence SAKNAIDSID…IEVEFSEFVM (85 aa).

This sequence belongs to the EzrA family.

Its subcellular location is the cell membrane. Negative regulator of FtsZ ring formation; modulates the frequency and position of FtsZ ring formation. Inhibits FtsZ ring formation at polar sites. Interacts either with FtsZ or with one of its binding partners to promote depolymerization. This chain is Septation ring formation regulator EzrA, found in Streptococcus suis (strain 98HAH33).